The primary structure comprises 96 residues: Small ribosomal subunit protein bS20 (96 aa).

It belongs to the bacterial ribosomal protein bS20 family.

In terms of biological role, binds directly to 16S ribosomal RNA. This Thermotoga petrophila (strain ATCC BAA-488 / DSM 13995 / JCM 10881 / RKU-1) protein is Small ribosomal subunit protein bS20.